The following is a 251-amino-acid chain: Zinc import ATP-binding protein ZnuC (251 aa).

The region spanning 5–220 is the ABC transporter domain; the sequence is VSLENVSVSF…PEFISMFGPR (216 aa). 37-44 is an ATP binding site; it reads GPNGAGKS.

The protein belongs to the ABC transporter superfamily. Zinc importer (TC 3.A.1.15.5) family. In terms of assembly, the complex is composed of two ATP-binding proteins (ZnuC), two transmembrane proteins (ZnuB) and a solute-binding protein (ZnuA).

The protein localises to the cell inner membrane. The enzyme catalyses Zn(2+)(out) + ATP(in) + H2O(in) = Zn(2+)(in) + ADP(in) + phosphate(in) + H(+)(in). In terms of biological role, part of the ABC transporter complex ZnuABC involved in zinc import. Responsible for energy coupling to the transport system. Seems to be important for the virulence. The sequence is that of Zinc import ATP-binding protein ZnuC from Salmonella typhimurium (strain LT2 / SGSC1412 / ATCC 700720).